The primary structure comprises 91 residues: Small ribosomal subunit protein bS6 (91 aa).

This sequence belongs to the bacterial ribosomal protein bS6 family.

Functionally, binds together with bS18 to 16S ribosomal RNA. In Leptospira borgpetersenii serovar Hardjo-bovis (strain JB197), this protein is Small ribosomal subunit protein bS6.